The chain runs to 274 residues: Large ribosomal subunit protein uL2cz/uL2cy (274 aa).

Disordered regions lie at residues 1–25 (MAIHLYKTSTPSTRNGAVDSQVKSN) and 223–274 (MNPV…RRTK).

It belongs to the universal ribosomal protein uL2 family. In terms of assembly, part of the 50S ribosomal subunit.

The protein localises to the plastid. It localises to the chloroplast. This Citrus sinensis (Sweet orange) protein is Large ribosomal subunit protein uL2cz/uL2cy (rpl2-A).